The following is a 387-amino-acid chain: Protein RecA (387 aa).

Position 78–85 (78–85 (GPESSGKT)) interacts with ATP. Over residues 355 to 369 (KSIERDTKETKETKS) the composition is skewed to basic and acidic residues. The tract at residues 355–387 (KSIERDTKETKETKSKQPVSFSTEADGDIAVGE) is disordered.

Belongs to the RecA family.

Its subcellular location is the cytoplasm. Functionally, can catalyze the hydrolysis of ATP in the presence of single-stranded DNA, the ATP-dependent uptake of single-stranded DNA by duplex DNA, and the ATP-dependent hybridization of homologous single-stranded DNAs. It interacts with LexA causing its activation and leading to its autocatalytic cleavage. The protein is Protein RecA of Leptospira biflexa serovar Patoc (strain Patoc 1 / ATCC 23582 / Paris).